The sequence spans 346 residues: Protein RecA (346 aa).

Gly65–Thr72 contacts ATP.

This sequence belongs to the RecA family.

It localises to the cytoplasm. Can catalyze the hydrolysis of ATP in the presence of single-stranded DNA, the ATP-dependent uptake of single-stranded DNA by duplex DNA, and the ATP-dependent hybridization of homologous single-stranded DNAs. It interacts with LexA causing its activation and leading to its autocatalytic cleavage. In Enterococcus mundtii, this protein is Protein RecA.